A 729-amino-acid polypeptide reads, in one-letter code: Neurochondrin (729 aa).

Residue Ser-2 is modified to N-acetylserine. Residue Ser-2 is modified to Phosphoserine. N-acetylalanine is present on Ser-2. Residues Cys-3 and Cys-4 are each lipidated (S-palmitoyl cysteine). At Arg-75 the chain carries Asymmetric dimethylarginine. Phosphoserine is present on Ser-448.

It belongs to the neurochondrin family. Interacts with MCHR1. Interacts with SEMA4C. Interacts with DIAPH1 (via FH3 domain). Interacts with GRM5. Post-translationally, palmitoylated. Palmitoylation by ZDHHC1, ZDHHC3 and ZDHHC11 regulates the association of NCDN with endosome membranes. May also be palmitoylated by ZDHHC7. Abundantly expressed in whole adult brain and in all individual brain regions examined, including spinal cord. Weakly expressed in ovary, testis, fetal brain and small intestine.

It localises to the cytoplasm. The protein resides in the cytosol. Its subcellular location is the endosome membrane. It is found in the cell projection. The protein localises to the dendrite. It localises to the postsynapse. Probably involved in signal transduction in the nervous system, via increasing cell surface localization of GRM5/mGluR5 and positively regulating its signaling. Required for the spatial learning process. Acts as a negative regulator of Ca(2+)-calmodulin-dependent protein kinase 2 (CaMK2) phosphorylation. May play a role in modulating melanin-concentrating hormone-mediated functions via its interaction with MCHR1 that interferes with G protein-coupled signal transduction. May be involved in bone metabolism. May also be involved in neurite outgrowth. The sequence is that of Neurochondrin from Homo sapiens (Human).